Consider the following 490-residue polypeptide: Type I restriction enzyme EcoEI methylase subunit (490 aa).

S-adenosyl-L-methionine is bound by residues 163–168 (EFYTPR), 193–195 (TGG), and Glu-226.

Belongs to the N(4)/N(6)-methyltransferase family. The type I restriction/modification system is composed of three polypeptides R, M and S; the restriction enzyme has stoichiometry R(2)M(2)S(1) while the methyltransferase is M(2)S(1).

The catalysed reaction is a 2'-deoxyadenosine in DNA + S-adenosyl-L-methionine = an N(6)-methyl-2'-deoxyadenosine in DNA + S-adenosyl-L-homocysteine + H(+). The subtype gamma methyltransferase (M) subunit of a type I restriction enzyme. The M and S subunits together form a methyltransferase (MTase) that methylates two adenine residues of the sequence 5'-GAGN(7)ATGC-3'. In the presence of the R subunit the complex can also act as an endonuclease, binding to the same target sequence but cutting the DNA some distance from this site. Whether the DNA is cut or modified depends on the methylation state of the target sequence. When the target site is unmodified, the DNA is cut. When the target site is hemimethylated, the complex acts as a maintenance MTase modifying the DNA so that both strands become methylated. After locating a non-methylated recognition site, the enzyme complex serves as a molecular motor that translocates DNA in an ATP-dependent manner until a collision occurs that triggers cleavage. In Escherichia coli, this protein is Type I restriction enzyme EcoEI methylase subunit (hsdM).